A 241-amino-acid chain; its full sequence is Polyol phosphate phosphatase PYP1 (241 aa).

Residue aspartate 9 is the Nucleophile of the active site. Mg(2+) contacts are provided by aspartate 9, aspartate 11, and aspartate 179. Aspartate 11 serves as the catalytic Proton donor.

The protein belongs to the HAD-like hydrolase superfamily. Requires Mg(2+) as cofactor.

It localises to the cytoplasm. The protein resides in the nucleus. It carries out the reaction D-ribitol 5-phosphate + H2O = ribitol + phosphate. The catalysed reaction is D-sorbitol 6-phosphate + H2O = D-sorbitol + phosphate. It catalyses the reaction sn-glycerol 1-phosphate + H2O = glycerol + phosphate. The enzyme catalyses D-erythrose 4-phosphate + H2O = D-erythrose + phosphate. In terms of biological role, hydrolyzes sugar alcohol (polyol) phosphates. Dephosphorylates a variety of substrates, including: sn-glycerol 1-phosphate (D-glycerol 3-phosphate), D-ribitol 5-phosphate, D-sorbitol 6-phosphate (D-glucitol 6-phosphate), and D-erythrose 4-phosphate. Prevents accumulation of toxic levels of polyol phosphates, which can impair glycolysis by inhibiting glucose-6-phosphate isomerase. The protein is Polyol phosphate phosphatase PYP1 of Saccharomyces cerevisiae (strain ATCC 204508 / S288c) (Baker's yeast).